The sequence spans 23 residues: Potassium channel toxin kappa-KTx 2.3 (23 aa).

2 cysteine pairs are disulfide-bonded: Cys-4–Cys-22 and Cys-8–Cys-18.

Belongs to the short scorpion toxin superfamily. Potassium channel inhibitor kappa-KTx family. Kappa-KTx 2 subfamily. In terms of tissue distribution, expressed by the venom gland.

The protein localises to the secreted. In terms of biological role, decreases the amplitude of the potassium current of the rat channels Kv1.1/KCNA1 by 33% and Kv1.2/KCNA2 by 8% as well as human Kv1.3/KCNA3 by 70%. The protein is Potassium channel toxin kappa-KTx 2.3 of Opisthacanthus madagascariensis (Scorpion).